The chain runs to 144 residues: Large ribosomal subunit protein uL15 (144 aa).

The interval 1–53 (MRLNSLSPAEGAKHSAKRLGRGIGSGLGKTGGRGHKGQKSRTGGGVRRGFEGG) is disordered. Residues 21-31 (RGIGSGLGKTG) show a composition bias toward gly residues.

It belongs to the universal ribosomal protein uL15 family. As to quaternary structure, part of the 50S ribosomal subunit.

In terms of biological role, binds to the 23S rRNA. This chain is Large ribosomal subunit protein uL15, found in Glaesserella parasuis serovar 5 (strain SH0165) (Haemophilus parasuis).